A 353-amino-acid polypeptide reads, in one-letter code: N-formyl peptide receptor 3 (353 aa).

Over 1–27 (METNFSIPLNETEEVLPEPAGHTVLWI) the chain is Extracellular. 2 N-linked (GlcNAc...) asparagine glycosylation sites follow: Asn4 and Asn10. A helical membrane pass occupies residues 28-50 (FSLLVHGVTFVFGVLGNGLVIWV). Residues 51-61 (AGFRMTRTVNT) lie on the Cytoplasmic side of the membrane. Residues 62-83 (ICYLNLALADFSFSAILPFRMV) traverse the membrane as a helical segment. Residues 84-100 (SVAMREKWPFGSFLCKL) are Extracellular-facing. Cys98 and Cys176 are oxidised to a cystine. Residues 101–121 (VHVMIDINLFVSVYLITIIAL) traverse the membrane as a helical segment. The Cytoplasmic segment spans residues 122–140 (DRCICVLHPAWAQNHRTMS). Residues 141–162 (LAKRVMTGLWIFTIVLTLPNFI) traverse the membrane as a helical segment. Residues 163–205 (FWTTISTTNGDTYCIFNFAFWGDTAVERLNVFITMAKVFLILH) are Extracellular-facing. A helical transmembrane segment spans residues 206-226 (FIIGFSVPMSIITVCYGIIAA). Residues 227–242 (KIHRNHMIKSSRPLRV) are Cytoplasmic-facing. Residues 243-266 (FAAVVASFFICWFPYELIGILMAV) traverse the membrane as a helical segment. The Extracellular portion of the chain corresponds to 267–286 (WLKEMLLNGKYKIILVLINP). The helical transmembrane segment at 287-306 (TSSLAFFNSCLNPILYVFMG) threads the bilayer. Residues 307–353 (RNFQERLIRSLPTSLERALTEVPDSAQTSNTDTTSASPPEETELQAM) are Cytoplasmic-facing. Residues 327 to 353 (EVPDSAQTSNTDTTSASPPEETELQAM) are disordered. The span at 331–343 (SAQTSNTDTTSAS) shows a compositional bias: polar residues.

It belongs to the G-protein coupled receptor 1 family. As to expression, detected in various tissues with highest expression in lung.

It localises to the cell membrane. Functionally, low affinity receptor for N-formyl-methionyl peptides, which are powerful neutrophils chemotactic factors. Binding of FMLP to the receptor causes activation of neutrophils. This response is mediated via a G-protein that activates a phosphatidylinositol-calcium second messenger system. Acts as a receptor for humanin. This Homo sapiens (Human) protein is N-formyl peptide receptor 3 (FPR3).